We begin with the raw amino-acid sequence, 140 residues long: Ribosome-binding factor A (140 aa).

A disordered region spans residues 121–140 (KAAEHGREDEELDDTEQDDK). Positions 129–140 (DEELDDTEQDDK) are enriched in acidic residues.

Belongs to the RbfA family. As to quaternary structure, monomer. Binds 30S ribosomal subunits, but not 50S ribosomal subunits or 70S ribosomes.

The protein localises to the cytoplasm. One of several proteins that assist in the late maturation steps of the functional core of the 30S ribosomal subunit. Associates with free 30S ribosomal subunits (but not with 30S subunits that are part of 70S ribosomes or polysomes). Required for efficient processing of 16S rRNA. May interact with the 5'-terminal helix region of 16S rRNA. The chain is Ribosome-binding factor A from Shewanella loihica (strain ATCC BAA-1088 / PV-4).